The following is a 290-amino-acid chain: Chitinase 10 (290 aa).

The signal sequence occupies residues 1-28 (MAKPTPAPRATPFLLAAVLSIVVVAASG). Cystine bridges form between Cys-70-Cys-132 and Cys-144-Cys-153. The Proton donor role is filled by Glu-114. N-linked (GlcNAc...) asparagine glycosylation is found at Asn-193 and Asn-234. A disulfide bridge connects residues Cys-252 and Cys-284.

The protein belongs to the glycosyl hydrolase 19 family. Chitinase class I subfamily. As to expression, expressed at low levels in roots, leaves and meristems.

The catalysed reaction is Random endo-hydrolysis of N-acetyl-beta-D-glucosaminide (1-&gt;4)-beta-linkages in chitin and chitodextrins.. In Oryza sativa subsp. japonica (Rice), this protein is Chitinase 10 (Cht10).